The primary structure comprises 337 residues: Glycerol-3-phosphate dehydrogenase [NAD(P)+] (337 aa).

NADPH is bound by residues Ser12, Trp13, and Lys110. Sn-glycerol 3-phosphate is bound by residues Lys110, Gly141, and Ser143. Position 145 (Ala145) interacts with NADPH. 5 residues coordinate sn-glycerol 3-phosphate: Lys196, Asp249, Ser259, Arg260, and Asn261. Lys196 serves as the catalytic Proton acceptor. Residue Arg260 coordinates NADPH. Residues Val284 and Glu286 each contribute to the NADPH site.

It belongs to the NAD-dependent glycerol-3-phosphate dehydrogenase family.

The protein resides in the cytoplasm. It catalyses the reaction sn-glycerol 3-phosphate + NAD(+) = dihydroxyacetone phosphate + NADH + H(+). The enzyme catalyses sn-glycerol 3-phosphate + NADP(+) = dihydroxyacetone phosphate + NADPH + H(+). The protein operates within membrane lipid metabolism; glycerophospholipid metabolism. Catalyzes the reduction of the glycolytic intermediate dihydroxyacetone phosphate (DHAP) to sn-glycerol 3-phosphate (G3P), the key precursor for phospholipid synthesis. This chain is Glycerol-3-phosphate dehydrogenase [NAD(P)+], found in Levilactobacillus brevis (strain ATCC 367 / BCRC 12310 / CIP 105137 / JCM 1170 / LMG 11437 / NCIMB 947 / NCTC 947) (Lactobacillus brevis).